A 201-amino-acid chain; its full sequence is Potassium-transporting ATPase KdpC subunit (201 aa).

The helical transmembrane segment at 12 to 34 threads the bilayer; that stretch reads LLALTMITGLAYPLAVTGLATVL. Residues 73–102 are disordered; sequence TVAPDPADSSKTVSAPYNAANSGGSNLGPT. Residues 81 to 101 are compositionally biased toward polar residues; that stretch reads SSKTVSAPYNAANSGGSNLGP.

This sequence belongs to the KdpC family. The system is composed of three essential subunits: KdpA, KdpB and KdpC.

Its subcellular location is the cell inner membrane. Its function is as follows. Part of the high-affinity ATP-driven potassium transport (or Kdp) system, which catalyzes the hydrolysis of ATP coupled with the electrogenic transport of potassium into the cytoplasm. This subunit acts as a catalytic chaperone that increases the ATP-binding affinity of the ATP-hydrolyzing subunit KdpB by the formation of a transient KdpB/KdpC/ATP ternary complex. This chain is Potassium-transporting ATPase KdpC subunit, found in Rhodopseudomonas palustris (strain ATCC BAA-98 / CGA009).